The primary structure comprises 346 residues: Propane 2-monooxygenase, reductase component (346 aa).

The 2Fe-2S ferredoxin-type domain maps to 5–94 (HKISFEPVDI…DCEIELLNFD (90 aa)). 4 residues coordinate [2Fe-2S] cluster: C39, C44, C46, and C78. In terms of domain architecture, FAD-binding FR-type spans 104–205 (IQDVTTKVAA…NGPYGSCTLR (102 aa)).

It belongs to the bacterial ring-hydroxylating dioxygenase ferredoxin reductase family. In terms of assembly, the propane 2-monooxygenase multicomponent enzyme system is composed of an electron transfer component and a monooxygenase component interacting with the effector protein PrmD. The electron transfer component is composed of a reductase (PrmB), and the monooxygenase component is formed by a large subunit (PrmA) and a small subunit (PrmC). FAD serves as cofactor. It depends on [2Fe-2S] cluster as a cofactor.

Its function is as follows. Reductase component of the propane 2-monooxygenase multicomponent enzyme system which is involved in the degradation of propane via the O2-dependent hydroxylation of propane. Reductase catalyzes the transfer of electrons from NADH or NADPH to monooxygenase. The protein is Propane 2-monooxygenase, reductase component of Gordonia sp. (strain TY-5).